A 901-amino-acid polypeptide reads, in one-letter code: Putative receptor protein kinase CRINKLY4 (901 aa).

The first 24 residues, 1–24 (MDHVPALVLAGCCFLALLPGWACG), serve as a signal peptide directing secretion. Topologically, residues 25–423 (LGSMSSIAVS…SRKLMAFQMR (399 aa)) are extracellular. 7 consecutive repeat copies span residues 33-68 (VSYG…GAPP), 72-107 (FLGL…GVPQ), 125-160 (LCAL…AVDE), 162-195 (VSTV…GVVG), 203-236 (FQSI…QVVP), 253-287 (MSTV…TSPP), and 292-330 (MYAL…AVPP). Residues 33-330 (VSYGEDGPVF…PLALPMAVPP (298 aa)) form a 7 X 36 AA repeats region. N-linked (GlcNAc...) asparagine glycans are attached at residues Asn-151 and Asn-179. Asn-282 is a glycosylation site (N-linked (GlcNAc...) asparagine). 3 cysteine pairs are disulfide-bonded: Cys-338–Cys-365, Cys-368–Cys-382, and Cys-372–Cys-390. One copy of the TNFR-Cys repeat lies at 357–391 (CKPANSRLCLPCSTGCPEGLYESSPCNATADRVCQ). Asn-383 carries an N-linked (GlcNAc...) asparagine glycan. A helical membrane pass occupies residues 424–444 (IFVAEIVFAVVLVLSVSVTTC). The Cytoplasmic portion of the chain corresponds to 445–901 (LYVRHKLRHC…QENLYLQHNF (457 aa)). Residues 505–712 (FSEDSQVGKG…EILSGRKAID (208 aa)) enclose the Protein kinase domain. ATP is bound by residues 511 to 519 (VGKGSFSCV) and Lys-533. Asp-634 acts as the Proton acceptor in catalysis. The segment at 845-876 (VTSSQRRKSSASEADIVGRRATDGRNVGSSIG) is disordered.

Belongs to the protein kinase superfamily. Ser/Thr protein kinase family. As to quaternary structure, homodimer.

The protein resides in the cell membrane. It localises to the endosome. It is found in the multivesicular body membrane. The catalysed reaction is L-seryl-[protein] + ATP = O-phospho-L-seryl-[protein] + ADP + H(+). It catalyses the reaction L-threonyl-[protein] + ATP = O-phospho-L-threonyl-[protein] + ADP + H(+). Putative receptor protein kinase. Could play a role in a differentiation signal. The CRINKLY4 (CR4) mutation affects leaf epidermis differentiation such that cell size and morphology are altered, and surface functions are compromised, allowing graft-like fusions between organs. This is Putative receptor protein kinase CRINKLY4 (CR4) from Zea mays (Maize).